The primary structure comprises 882 residues: MFNFFKKNKLNKFQNTINEIHQIGNTVKNYSDAELKKQTHKLKKKIIQNSNLTEILPESFAIVKEAIKRSTGMILFDVQLVGSIVLHQGQIAEMKTGEGKTIVAITTGYLNALTSKGVHIITVNDYLAKRDSELAQKICSYIDLKVGLITQSMTYEEKKRAYDCDITYITNSELGFDYLRDNMAIEFNQIVQRGFNFAIIDEVDSILIDEARTPLIISGPFEIEINKYKKSTSIANTLQKDLDYEIDEKTKNITLTEKGISRCENMLNIDNLYDIHDSWIQYLLNSLKAKDLFLKNQHYIVKNNEIIIVDEFTGRVMQGRRWSDGLHQAIESKENIPIQQENKTLASITYQNLFLLYEKLSGMTGTAKTEETELDKIYNLEVLEIPTNKICKRQDLPDLVYKTEYKKWQAIADECFDMYHIGRPTLIGTTNVEKSELLAKILMELQIPFNLLNAKPENVSREAEIITQAGRKNTITISTNMAGRGTDIILGGNPEALSKLALTYYLQNKLGLKVNYLLNNIETQITTIINNYVLDMQELDIYKYKNIDLKKIQYYIEKIIKNEHTKYSEEEKLQKLYLKILSEYKNICYQEKQEVLKLGGLYVIGTERHESRRIDNQLRGRAGRQGDIGASRFFLSLEDNLLRIFGGDKISQLMDNLNIDEHTPIESIILSKSLDSAQKKVESYFYDIRKQLFEYDEVINNQRQAIYAERKRILQSSFTRDCIIEYAESTIDEILTAFYREDNINNKNHIIKKIYQLLNLTENFHFNTLYDMNYKQIQEFLYEQLRISYDLRESYLEQLRPGLIRKLEKYYLLQQIDKAWQDHLDKMALLRESIGWRSYGQQDPLVEYKNEAFSLFINMVRYIRQTVTYLTMRSRLIINVNN.

Residues Gln79, 97–101, and Asp487 contribute to the ATP site; that span reads GEGKT.

This sequence belongs to the SecA family.

The protein localises to the plastid. The protein resides in the chloroplast stroma. Its subcellular location is the chloroplast thylakoid membrane. The enzyme catalyses ATP + H2O + cellular proteinSide 1 = ADP + phosphate + cellular proteinSide 2.. Its function is as follows. Has a central role in coupling the hydrolysis of ATP to the transfer of proteins across the thylakoid membrane. This Gracilaria tenuistipitata var. liui (Red alga) protein is Protein translocase subunit SecA.